Here is a 472-residue protein sequence, read N- to C-terminus: Aspartyl/glutamyl-tRNA(Asn/Gln) amidotransferase subunit B (472 aa).

Belongs to the GatB/GatE family. GatB subfamily. Heterotrimer of A, B and C subunits.

It catalyses the reaction L-glutamyl-tRNA(Gln) + L-glutamine + ATP + H2O = L-glutaminyl-tRNA(Gln) + L-glutamate + ADP + phosphate + H(+). The catalysed reaction is L-aspartyl-tRNA(Asn) + L-glutamine + ATP + H2O = L-asparaginyl-tRNA(Asn) + L-glutamate + ADP + phosphate + 2 H(+). In terms of biological role, allows the formation of correctly charged Asn-tRNA(Asn) or Gln-tRNA(Gln) through the transamidation of misacylated Asp-tRNA(Asn) or Glu-tRNA(Gln) in organisms which lack either or both of asparaginyl-tRNA or glutaminyl-tRNA synthetases. The reaction takes place in the presence of glutamine and ATP through an activated phospho-Asp-tRNA(Asn) or phospho-Glu-tRNA(Gln). The chain is Aspartyl/glutamyl-tRNA(Asn/Gln) amidotransferase subunit B from Campylobacter jejuni subsp. jejuni serotype O:6 (strain 81116 / NCTC 11828).